Consider the following 598-residue polypeptide: Aspartate--tRNA(Asp/Asn) ligase (598 aa).

Glu-177 is a binding site for L-aspartate. Residues Gln-201–Lys-204 are aspartate. Arg-223 lines the L-aspartate pocket. ATP-binding positions include Arg-223–Glu-225 and Gln-232. Residue His-456 participates in L-aspartate binding. Glu-493 serves as a coordination point for ATP. Arg-500 contributes to the L-aspartate binding site. Gly-545 to Arg-548 is an ATP binding site.

Belongs to the class-II aminoacyl-tRNA synthetase family. Type 1 subfamily. As to quaternary structure, homodimer.

The protein resides in the cytoplasm. The catalysed reaction is tRNA(Asx) + L-aspartate + ATP = L-aspartyl-tRNA(Asx) + AMP + diphosphate. Aspartyl-tRNA synthetase with relaxed tRNA specificity since it is able to aspartylate not only its cognate tRNA(Asp) but also tRNA(Asn). Reaction proceeds in two steps: L-aspartate is first activated by ATP to form Asp-AMP and then transferred to the acceptor end of tRNA(Asp/Asn). This Prochlorococcus marinus (strain AS9601) protein is Aspartate--tRNA(Asp/Asn) ligase.